The primary structure comprises 158 residues: Na(+)/H(+) antiporter subunit E (158 aa).

2 consecutive transmembrane segments (helical) span residues 21-41 (SPSAAGFITGYILGMLSLFFF) and 51-71 (LWKLISIIKLCFIFIKELYLA).

Belongs to the CPA3 antiporters (TC 2.A.63) subunit E family. In terms of assembly, forms a heterooligomeric complex that consists of seven subunits: MrpA, MrpB, MrpC, MrpD, MrpE, MrpF and MrpG.

The protein resides in the cell membrane. In terms of biological role, mrp complex is a Na(+)/H(+) antiporter that is considered to be the major Na(+) excretion system in B.subtilis. Has a major role in Na(+) resistance and a minor role in Na(+)- and K(+)-dependent pH homeostasis as compared to TetB. MrpA may be the actual Na(+)/H(+) antiporter, although the six other Mrp proteins are all required for Na(+)/H(+) antiport activity and Na(+) resistance. MrpA is required for initiation of sporulation when external Na(+) concentration increases. Also transports Li(+) but not K(+), Ca(2+) or Mg(2+). The chain is Na(+)/H(+) antiporter subunit E (mrpE) from Bacillus subtilis (strain 168).